Here is a 92-residue protein sequence, read N- to C-terminus: Co-chaperonin GroES (92 aa).

The protein belongs to the GroES chaperonin family. As to quaternary structure, heptamer of 7 subunits arranged in a ring. Interacts with the chaperonin GroEL.

It is found in the cytoplasm. In terms of biological role, together with the chaperonin GroEL, plays an essential role in assisting protein folding. The GroEL-GroES system forms a nano-cage that allows encapsulation of the non-native substrate proteins and provides a physical environment optimized to promote and accelerate protein folding. GroES binds to the apical surface of the GroEL ring, thereby capping the opening of the GroEL channel. The sequence is that of Co-chaperonin GroES from Methanosarcina barkeri (strain Fusaro / DSM 804).